Here is a 425-residue protein sequence, read N- to C-terminus: Glutamyl-tRNA reductase (425 aa).

Substrate contacts are provided by residues 49–52 (TCNR), Ser107, 112–114 (EPQ), and Gln118. Cys50 (nucleophile) is an active-site residue. 187-192 (GAGETI) is a binding site for NADP(+).

The protein belongs to the glutamyl-tRNA reductase family. As to quaternary structure, homodimer.

It catalyses the reaction (S)-4-amino-5-oxopentanoate + tRNA(Glu) + NADP(+) = L-glutamyl-tRNA(Glu) + NADPH + H(+). It functions in the pathway porphyrin-containing compound metabolism; protoporphyrin-IX biosynthesis; 5-aminolevulinate from L-glutamyl-tRNA(Glu): step 1/2. Its function is as follows. Catalyzes the NADPH-dependent reduction of glutamyl-tRNA(Glu) to glutamate 1-semialdehyde (GSA). In Pseudomonas putida (strain W619), this protein is Glutamyl-tRNA reductase.